The chain runs to 376 residues: N,N'-diacetylbacillosaminyl-diphospho-undecaprenol alpha-1,3-N-acetylgalactosaminyltransferase (376 aa).

This sequence belongs to the glycosyltransferase group 1 family.

The catalysed reaction is N,N'-diacetyl-alpha-D-bacillosaminyl-tri-trans,hepta-cis-undecaprenyl diphosphate + UDP-N-acetyl-alpha-D-galactosamine = N-acetyl-alpha-D-galactosaminyl-(1-&gt;3)-N,N'-diacetyl-alpha-D-bacillosaminyl-tri-trans,hepta-cis-undecaprenyl diphosphate + UDP + H(+). It participates in protein modification; protein glycosylation. In terms of biological role, adds the first GalNAc residue on to the isoprenoid-linked bacillosamine (2,4-diacetamido-2,4,6-trideoxyglucose) carrier in the N-linked protein glycosylation pathway. Acts first on the undecaprenylpyrophosphate-linked bacillosamine (Und-PP-Bac) substrate to yield the disaccharide. The polypeptide is N,N'-diacetylbacillosaminyl-diphospho-undecaprenol alpha-1,3-N-acetylgalactosaminyltransferase (pglA) (Campylobacter jejuni subsp. jejuni serotype O:2 (strain ATCC 700819 / NCTC 11168)).